A 771-amino-acid polypeptide reads, in one-letter code: Solute carrier family 7 member 14 (771 aa).

The next 6 helical transmembrane spans lie at 58-78, 83-103, 130-150, 187-207, 216-236, and 251-271; these read LISLGVGSCVGTGMYVVSGLV, AGPGVIVSFIIAAVASILSGV, FVAFFIGWNLILEYLIGTAAG, YPDLLALVIAIIVTIIVALGV, VLNVLNLAVWVFIMIAGFFFI, and WSGVLQGAATCFYAFIGFDII. N282 carries an N-linked (GlcNAc...) asparagine glycan. A run of 5 helical transmembrane segments spans residues 291–311, 336–356, 360–380, 384–404, and 407–427; these read ASLVICLTAYVSVSMILTLMV, FVVAIGSVAGLTVSLLGSLFP, VIYAMAGDGLLFRFLAHVSSY, PVVACIVSGFLAALLSLLVSL, and LIEMMSIGTLLAYTLVSVCVL. A phosphoserine mark is found at S465, S468, and S488. 4 helical membrane-spanning segments follow: residues 565-585, 596-616, 628-648, and 655-675; these read VTICVLLLFILMFVFCSFIIF, WAILLVVLMVLLISALVFVIL, MAPCLPFVPAFAMLVNIYLML, and WIRFAVWCFVGMLIYFGYGIW. N676 carries N-linked (GlcNAc...) asparagine glycosylation. The tract at residues 712–771 is disordered; sequence TEGESQENWGGPAEDKGFYYQQMSDTQPNTRTSSKAKSKSKHKQNSEALIANDELDYSPE. Positions 732-743 are enriched in polar residues; that stretch reads QQMSDTQPNTRT. The span at 745–754 shows a compositional bias: basic residues; that stretch reads SKAKSKSKHK. 2 positions are modified to phosphoserine: S757 and S769.

It belongs to the amino acid-polyamine-organocation (APC) superfamily. Cationic amino acid transporter (CAT) (TC 2.A.3.3) family.

Its subcellular location is the lysosome membrane. It catalyses the reaction 4-aminobutanoate(in) = 4-aminobutanoate(out). Functionally, imports 4-aminobutanoate (GABA) into lysosomes. May act as a GABA sensor that regulates mTORC2-dependent INS signaling and gluconeogenesis. The transport mechanism and substrate selectivity remain to be elucidated. The sequence is that of Solute carrier family 7 member 14 from Bos taurus (Bovine).